We begin with the raw amino-acid sequence, 336 residues long: CMP-sialic acid transporter (336 aa).

Topologically, residues 1 to 9 (MAPARENVS) are cytoplasmic. The helical transmembrane segment at 10 to 30 (LFFKLYCLTVMTLVAAAYTVA) threads the bilayer. Residues 31 to 45 (LRYTRTTAEELYFST) lie on the Lumenal side of the membrane. The helical transmembrane segment at 46–64 (TAVCITEVIKLLISVGLLA) threads the bilayer. Lys55 serves as a coordination point for CMP-N-acetyl-beta-neuraminate. Topologically, residues 65 to 87 (KETGSLGRFKASLSENVLGSPKE) are cytoplasmic. Residues 88–108 (LAKLSVPSLVYAVQNNMAFLA) traverse the membrane as a helical segment. 101–102 (QN) contacts CMP-N-acetyl-beta-neuraminate. Topologically, residues 109–114 (LSNLDA) are lumenal. The helical transmembrane segment at 115-135 (AVYQVTYQLKIPCTALCTVLM) threads the bilayer. Residue 117-124 (YQVTYQLK) participates in CMP-N-acetyl-beta-neuraminate binding. The Cytoplasmic portion of the chain corresponds to 136-141 (LNRTLS). Residues 142–160 (KLQWISVFMLCGGVTLVQW) traverse the membrane as a helical segment. Over 161–175 (KPAQATKVVVAQNPL) the chain is Lumenal. A helical transmembrane segment spans residues 176–196 (LGFGAIAIAVLCSGFAGVYFE). Ser188 serves as a coordination point for CMP-N-acetyl-beta-neuraminate. The Cytoplasmic portion of the chain corresponds to 197–209 (KVLKSSDTSLWVR). 210–214 (NIQMY) contacts CMP-N-acetyl-beta-neuraminate. Residues 210 to 228 (NIQMYLSGIVVTLAGTYLS) traverse the membrane as a helical segment. Over 229 to 243 (DGAEIQEKGFFYGYT) the chain is Lumenal. Residues 244–262 (YYVWFVIFLASVGGLYTSV) form a helical membrane-spanning segment. The Cytoplasmic segment spans residues 263 to 269 (VVKYTDN). A helical membrane pass occupies residues 270–288 (IMKGFSAAAAIVLSTIASV). CMP-N-acetyl-beta-neuraminate is bound at residue Lys272. The Lumenal portion of the chain corresponds to 289–296 (LLFGLQIT). The chain crosses the membrane as a helical span at residues 297–315 (LSFALGALLVCVSIYLYGL). At 316–336 (PRQDTTSIQQEATSKERIIGV) the chain is on the cytoplasmic side. The disordered stretch occupies residues 316-336 (PRQDTTSIQQEATSKERIIGV).

Belongs to the nucleotide-sugar transporter family. SLC35A subfamily. In terms of assembly, monomer. In terms of tissue distribution, ubiquitous. Found in all the tissues examined including skeletal muscle, brain, heart, liver, kidney and spleen.

It localises to the golgi apparatus membrane. It carries out the reaction CMP-N-acetyl-beta-neuraminate(in) + CMP(out) = CMP-N-acetyl-beta-neuraminate(out) + CMP(in). It catalyses the reaction CMP-N-acetyl-beta-neuraminate(in) + AMP(out) = CMP-N-acetyl-beta-neuraminate(out) + AMP(in). The enzyme catalyses CDP-L-ribitol(in) + CDP(out) = CDP-L-ribitol(out) + CDP(in). The catalysed reaction is UMP(out) + CMP-N-acetyl-beta-neuraminate(in) = UMP(in) + CMP-N-acetyl-beta-neuraminate(out). Functionally, transports CMP-sialic acid from the cytosol into the Golgi apparatus, functioning as an antiporter that exchanges CMP-sialic acid for CMP. Binds both CMP-sialic acid and free CMP, but has higher affinity for free CMP. Also able to exchange CMP-sialic acid for AMP and UMP. Also mediates the transport of CDP-ribitol. The polypeptide is CMP-sialic acid transporter (Mus musculus (Mouse)).